We begin with the raw amino-acid sequence, 984 residues long: Serine/threonine-protein kinase Nek9 (984 aa).

At Ser-2 the chain carries N-acetylserine. Phosphoserine occurs at positions 2, 13, 16, and 20. Residues 14–43 are disordered; the sequence is INSDFGSESGGGGDSGPGPSAVPGPRAGGG. Tyr-52 carries the phosphotyrosine modification. One can recognise a Protein kinase domain in the interval 52 to 308; sequence YIPIRVLGRG…ADALLDLPLL (257 aa). 58 to 66 contacts ATP; the sequence is LGRGAFGEA. Residue Ser-76 is modified to Phosphoserine. An ATP-binding site is contributed by Lys-81. Asp-176 serves as the catalytic Proton acceptor. A Phosphothreonine; by autocatalysis modification is found at Thr-210. Thr-254 is subject to Phosphothreonine. Phosphoserine is present on Ser-331. Residue Thr-333 is modified to Phosphothreonine. 6 RCC1 repeats span residues 388–444, 445–498, 499–550, 551–615, 616–668, and 669–726; these read KELY…VTDE, GQLY…LTRN, KEVY…LTQS, GKVL…IDER, GRLL…ATDD, and NHIF…IVEK. An interaction with NEK6 region spans residues 732–896; it reads TIRSNSSGLS…GKALTSAACA (165 aa). Ser-741 bears the Phosphoserine mark. The interval 744–790 is disordered; it reads TVVQSSSPGGGIGGGGGGGGGGGGEEEDSQQESETPDPSGGFRGTME. Positions 751–766 are enriched in gly residues; sequence PGGGIGGGGGGGGGGG. Residues 767–778 show a composition bias toward acidic residues; the sequence is GEEEDSQQESET. A phosphoserine mark is found at Ser-808 and Ser-839. Thr-891 is subject to Phosphothreonine. The stretch at 896–945 forms a coiled coil; the sequence is ACSALQVEVDRLQALVLKCLEEQQKLQQENLQMFTQLQKLNKKLEGGQQV. The segment at 940 to 984 is disordered; sequence EGGQQVGMHSRGTQTAKEEMEMDPKPDLDSESWCLLGTDSCRPSL. Ser-949 is subject to Phosphoserine. Positions 955 to 967 are enriched in basic and acidic residues; it reads AKEEMEMDPKPDL. Residue Ser-983 is modified to Phosphoserine.

It belongs to the protein kinase superfamily. NEK Ser/Thr protein kinase family. NIMA subfamily. Homodimer; homodimerization is required to activate NEK7. Binds to Ran GTPase. Has a greater affinity for Ran-GDP over Ran-GTP. Interacts with SSRP1 and SUPT16H, the 2 subunits of the FACT complex. Interacts with DYNLL1; phosphorylation at Ser-949 strongly reduces DYNLL1 binding. The cofactor is Mg(2+). In terms of processing, autophosphorylated on serine and threonine residues. When complexed with FACT, exhibits markedly elevated phosphorylation on Thr-210. During mitosis, not phosphorylated on Thr-210. Phosphorylated by CDK1 in vitro.

It is found in the cytoplasm. It localises to the nucleus. The catalysed reaction is L-seryl-[protein] + ATP = O-phospho-L-seryl-[protein] + ADP + H(+). The enzyme catalyses L-threonyl-[protein] + ATP = O-phospho-L-threonyl-[protein] + ADP + H(+). Activated during mitosis by intramolecular autophosphorylation. Activity and autophosphorylation is activated by manganese &gt;&gt; magnesium ions. It is not cell-cycle regulated but activity is higher in G0-arrested cells. Its function is as follows. Pleiotropic regulator of mitotic progression, participating in the control of spindle dynamics and chromosome separation. Phosphorylates different histones, myelin basic protein, beta-casein, and BICD2. Phosphorylates histone H3 on serine and threonine residues and beta-casein on serine residues. Important for G1/S transition and S phase progression. Phosphorylates NEK6 and NEK7 and stimulates their activity by releasing the autoinhibitory functions of Tyr-108 and Tyr-97 respectively. The chain is Serine/threonine-protein kinase Nek9 from Mus musculus (Mouse).